Here is a 332-residue protein sequence, read N- to C-terminus: Putative D-threonate 4-phosphate dehydrogenase (332 aa).

His-140 and Thr-141 together coordinate substrate. A divalent metal cation-binding residues include His-170, His-214, and His-270. Substrate-binding residues include Lys-278, Asn-287, and Arg-296.

The protein belongs to the PdxA family. PdxA2 subfamily. As to quaternary structure, homodimer. A divalent metal cation serves as cofactor.

It catalyses the reaction 4-O-phospho-D-threonate + NAD(+) = dihydroxyacetone phosphate + CO2 + NADH. Its function is as follows. Catalyzes the NAD-dependent oxidation and subsequent decarboxylation of D-threonate 4-phosphate to produce dihydroxyacetone phosphate (DHAP). The protein is Putative D-threonate 4-phosphate dehydrogenase of Oceanobacillus iheyensis (strain DSM 14371 / CIP 107618 / JCM 11309 / KCTC 3954 / HTE831).